Reading from the N-terminus, the 255-residue chain is Thiazole synthase (255 aa).

Lysine 96 (schiff-base intermediate with DXP) is an active-site residue. 1-deoxy-D-xylulose 5-phosphate is bound by residues glycine 157, alanine 183 to glycine 184, and asparagine 205 to threonine 206.

Belongs to the ThiG family. Homotetramer. Forms heterodimers with either ThiH or ThiS.

The protein localises to the cytoplasm. The catalysed reaction is [ThiS sulfur-carrier protein]-C-terminal-Gly-aminoethanethioate + 2-iminoacetate + 1-deoxy-D-xylulose 5-phosphate = [ThiS sulfur-carrier protein]-C-terminal Gly-Gly + 2-[(2R,5Z)-2-carboxy-4-methylthiazol-5(2H)-ylidene]ethyl phosphate + 2 H2O + H(+). It functions in the pathway cofactor biosynthesis; thiamine diphosphate biosynthesis. Its function is as follows. Catalyzes the rearrangement of 1-deoxy-D-xylulose 5-phosphate (DXP) to produce the thiazole phosphate moiety of thiamine. Sulfur is provided by the thiocarboxylate moiety of the carrier protein ThiS. In vitro, sulfur can be provided by H(2)S. In Heliobacterium modesticaldum (strain ATCC 51547 / Ice1), this protein is Thiazole synthase.